The sequence spans 67 residues: ATP synthase F(0) complex subunit 8 (67 aa).

The chain crosses the membrane as a helical span at residues 8-24 (TWFITILSMLITLFILF). K54 is subject to N6-acetyllysine; alternate. Residue K54 is modified to N6-succinyllysine; alternate. The residue at position 57 (K57) is an N6-acetyllysine.

This sequence belongs to the ATPase protein 8 family. As to quaternary structure, component of the ATP synthase complex composed at least of ATP5F1A/subunit alpha, ATP5F1B/subunit beta, ATP5MC1/subunit c (homooctomer), MT-ATP6/subunit a, MT-ATP8/subunit 8, ATP5ME/subunit e, ATP5MF/subunit f, ATP5MG/subunit g, ATP5MK/subunit k, ATP5MJ/subunit j, ATP5F1C/subunit gamma, ATP5F1D/subunit delta, ATP5F1E/subunit epsilon, ATP5PF/subunit F6, ATP5PB/subunit b, ATP5PD/subunit d, ATP5PO/subunit OSCP. ATP synthase complex consists of a soluble F(1) head domain (subunits alpha(3) and beta(3)) - the catalytic core - and a membrane F(0) domain - the membrane proton channel (subunits c, a, 8, e, f, g, k and j). These two domains are linked by a central stalk (subunits gamma, delta, and epsilon) rotating inside the F1 region and a stationary peripheral stalk (subunits F6, b, d, and OSCP). Interacts with PRICKLE3.

It is found in the mitochondrion membrane. Subunit 8, of the mitochondrial membrane ATP synthase complex (F(1)F(0) ATP synthase or Complex V) that produces ATP from ADP in the presence of a proton gradient across the membrane which is generated by electron transport complexes of the respiratory chain. ATP synthase complex consist of a soluble F(1) head domain - the catalytic core - and a membrane F(1) domain - the membrane proton channel. These two domains are linked by a central stalk rotating inside the F(1) region and a stationary peripheral stalk. During catalysis, ATP synthesis in the catalytic domain of F(1) is coupled via a rotary mechanism of the central stalk subunits to proton translocation. In vivo, can only synthesize ATP although its ATP hydrolase activity can be activated artificially in vitro. Part of the complex F(0) domain. This Dugong dugon (Dugong) protein is ATP synthase F(0) complex subunit 8.